Consider the following 209-residue polypeptide: Transcription factor atf31 (209 aa).

A compositionally biased stretch (polar residues) spans 90–103; it reads SKSPSIISEASHNS. The disordered stretch occupies residues 90–133; it reads SKSPSIISEASHNSPSRELDDSGDENTSKLTGTKQSMLKARNRQ. Residues 121–184 form the bZIP domain; sequence GTKQSMLKAR…IKLRTLVFAH (64 aa). The basic motif stretch occupies residues 123–161; it reads KQSMLKARNRQAAQKCRIKKKKYLQTLQDQVNYYTSENK. The tract at residues 163–177 is leucine-zipper; it reads LLQSANDLREEIIKL.

This sequence belongs to the bZIP family.

Its subcellular location is the nucleus. The polypeptide is Transcription factor atf31 (atf31) (Schizosaccharomyces pombe (strain 972 / ATCC 24843) (Fission yeast)).